An 824-amino-acid chain; its full sequence is Type IV secretion system protein PtlC (824 aa).

456–463 (GQSGSGKT) serves as a coordination point for ATP.

It belongs to the TrbE/VirB4 family.

It is found in the cell membrane. In terms of biological role, component of the type IV secretion system ptl essential for secretion of assembled pertussis toxin (PTX) through the outer membrane. In Bordetella pertussis (strain Tohama I / ATCC BAA-589 / NCTC 13251), this protein is Type IV secretion system protein PtlC (ptlC).